A 267-amino-acid polypeptide reads, in one-letter code: Phosphate import ATP-binding protein PstB (267 aa).

Residues Val-21 to Ile-262 form the ABC transporter domain. Gly-53–Ser-60 is a binding site for ATP.

This sequence belongs to the ABC transporter superfamily. Phosphate importer (TC 3.A.1.7) family. The complex is composed of two ATP-binding proteins (PstB), two transmembrane proteins (PstC and PstA) and a solute-binding protein (PstS).

The protein localises to the cell inner membrane. The catalysed reaction is phosphate(out) + ATP + H2O = ADP + 2 phosphate(in) + H(+). Part of the ABC transporter complex PstSACB involved in phosphate import. Responsible for energy coupling to the transport system. This Xanthomonas oryzae pv. oryzae (strain MAFF 311018) protein is Phosphate import ATP-binding protein PstB.